Here is a 1357-residue protein sequence, read N- to C-terminus: DNA-directed RNA polymerase subunit beta (1357 aa).

This sequence belongs to the RNA polymerase beta chain family. As to quaternary structure, the RNAP catalytic core consists of 2 alpha, 1 beta, 1 beta' and 1 omega subunit. When a sigma factor is associated with the core the holoenzyme is formed, which can initiate transcription.

The catalysed reaction is RNA(n) + a ribonucleoside 5'-triphosphate = RNA(n+1) + diphosphate. Its function is as follows. DNA-dependent RNA polymerase catalyzes the transcription of DNA into RNA using the four ribonucleoside triphosphates as substrates. In Nitrosospira multiformis (strain ATCC 25196 / NCIMB 11849 / C 71), this protein is DNA-directed RNA polymerase subunit beta.